We begin with the raw amino-acid sequence, 147 residues long: Heavy metal-dependent transcription regulator 1 (147 aa).

One can recognise an HTH merR-type domain in the interval 1 to 70 (MNIGQASKVV…VEQIKDLLAL (70 aa)). Positions 3–22 (IGQASKVVSGVSSKMIRYYE) form a DNA-binding region, H-T-H motif.

It localises to the cytoplasm. Its function is as follows. Transcriptional regulator involved in acid tolerance. Binds copper. This Rhizobium meliloti (strain 1021) (Ensifer meliloti) protein is Heavy metal-dependent transcription regulator 1 (hmrR1).